Reading from the N-terminus, the 189-residue chain is Phomopsin biosynthesis cluster protein C' (189 aa).

This sequence belongs to the oryJ family.

Functionally, part of the gene cluster that mediates the biosynthesis of the phomopsins, a group of hexapeptide mycotoxins which infects lupins and causes lupinosis disease in livestock. The role of phomC' within the phomopsins biosynthesis pathway has still to be determined. The pathway starts with the processing of the precursor phomA by several endopeptidases including kexin proteases as well as the cluster-specific S41 family peptidase phomP1 and the oligopeptidase phomG to produce 10 identical copies of the hexapeptide Tyr-Val-Ile-Pro-Ile-Asp. After being excised from the precursor peptide, the core peptides are cyclized and modified post-translationally by enzymes encoded within the gene cluster. The timing and order of proteolysis of the phomA precursor and PTMs are still unknown. Two tyrosinase-like enzymes, phomQ1 and phomQ2, catalyze the chlorination and hydroxylation of Tyr, respectively. PhomYb, is proposed to be involved in the construction of the macrocyclic structure. The other 4 ustYa family proteins may be involved in PTMs that generate the unique structure of phomopsin A. PhomYa is required for the hydroxylation of C-beta of Tyr. PhomYc, phomYd, and phomYe are responsible for the biosynthesis of 2,3-dehydroisoleucine (dIle), 2,3-dehydroaspartic acid (dAsp), and 3,4-dehydroproline (dPro), respectively. While dIle formation by phomYc is indispensable for the installation of dAsp by phomYd, the order of the other PTMs have not been elucidated yet. Most of the biosynthetic enzymes likely have broad substrate specificity, and thus, there might be a metabolic grid from a precursor to phomopsin A. The enzyme(s) responsible for the biosynthesis of 3,4-dehydrovaline (dVal) have also not been identified yet. Finally, phomM acts as an S-adenosylmethionine-dependent alpha-N-methyltransferase that catalyzes two successive N-methylation reactions, converting N-desmethyl-phomopsin A to phomopsin A and phomopsin A further to an N,N-dimethylated congener called phomopsin E. The protein is Phomopsin biosynthesis cluster protein C' of Diaporthe leptostromiformis (Lupinosis disease fungus).